The sequence spans 733 residues: Microtubule-associated protein tau (733 aa).

The span at M1–G16 shows a compositional bias: basic and acidic residues. The interval M1 to V548 is disordered. A2 carries the post-translational modification N-acetylalanine. A Phosphotyrosine; by FYN modification is found at Y18. K33 participates in a covalent cross-link: Glycyl lysine isopeptide (Lys-Gly) (interchain with G-Cter in ubiquitin). 2 positions are modified to phosphoserine: S35 and S50. Residues S50 to T60 are compositionally biased toward polar residues. Residues T58, T60, and T100 each carry the phosphothreonine modification. At R115 the chain carries Omega-N-methylarginine. A compositionally biased stretch (polar residues) spans S126 to S137. The span at R157 to R172 shows a compositional bias: basic and acidic residues. S188 is subject to Phosphoserine. The span at E189–S202 shows a compositional bias: acidic residues. The span at Q203–L212 shows a compositional bias: polar residues. Basic and acidic residues-rich tracts occupy residues E270 to D294 and A354 to A366. A compositionally biased stretch (polar residues) spans K413–T427. Phosphothreonine is present on T445. R447 carries the omega-N-methylarginine modification. S451 is modified (phosphoserine). K455 carries the post-translational modification N6,N6-dimethyllysine; alternate. K455 is subject to N6-acetyllysine; alternate. A phosphothreonine mark is found at T461, T467, and T468. S470 carries the phosphoserine modification. T473 carries the post-translational modification Phosphothreonine. Residues S477, S483, and S487 each carry the phosphoserine modification. The span at E479 to S506 shows a compositional bias: low complexity. Y489 is subject to Phosphotyrosine. A phosphoserine mark is found at S490, S491, and S494. Phosphothreonine occurs at positions 497 and 504. The residue at position 506 (S506) is a Phosphoserine. T509 carries the post-translational modification Phosphothreonine. K517 carries the post-translational modification N6-acetyllysine. Residue T523 is modified to Phosphothreonine. 3 positions are modified to phosphoserine: S527, S529, and S531. Tau/MAP repeat units lie at residues Q536–K566, V567–S597, V598–Q628, and V629–N660. K546 is covalently cross-linked (Glycyl lysine isopeptide (Lys-Gly) (interchain with G-Cter in ubiquitin)). At K551 the chain carries N6-acetyllysine; alternate. K551 carries the N6-methyllysine; alternate modification. K551 is covalently cross-linked (Glycyl lysine isopeptide (Lys-Gly) (interchain with G-Cter in ubiquitin); alternate). Phosphoserine; by MARK1, BRSK1, BRSK2 and PHK is present on S554. K559 participates in a covalent cross-link: Glycyl lysine isopeptide (Lys-Gly) (interchain with G-Cter in ubiquitin). N6-acetyllysine; alternate is present on K573. K573 is covalently cross-linked (Glycyl lysine isopeptide (Lys-Gly) (interchain with G-Cter in ubiquitin); alternate). A phosphoserine mark is found at S577 and S581. K582 bears the N6-acetyllysine mark. C583 and C614 are disulfide-bonded. The residue at position 585 (S585) is a Phosphoserine. K590 carries the post-translational modification N6-acetyllysine; alternate. K590 participates in a covalent cross-link: Glycyl lysine isopeptide (Lys-Gly) (interchain with G-Cter in ubiquitin); alternate. At S597 the chain carries Phosphoserine. K603 is subject to N6,N6-dimethyllysine; alternate. Residues K603, K609, and K613 each carry the N6-acetyllysine; alternate modification. Glycyl lysine isopeptide (Lys-Gly) (interchain with G-Cter in ubiquitin); alternate cross-links involve residues K603, K609, and K613. Phosphoserine is present on S616. N6-acetyllysine; alternate is present on residues K623, K635, and K639. Residues K623, K635, and K639 each participate in a glycyl lysine isopeptide (Lys-Gly) (interchain with G-Cter in ubiquitin); alternate cross-link. R641 carries the omega-N-methylarginine modification. At S644 the chain carries Phosphoserine. K645 is covalently cross-linked (Glycyl lysine isopeptide (Lys-Gly) (interchain with G-Cter in ubiquitin)). S648 carries the phosphoserine modification. K661 carries the post-translational modification N6-acetyllysine; alternate. K661 participates in a covalent cross-link: Glycyl lysine isopeptide (Lys-Gly) (interchain with G-Cter in ubiquitin); alternate. K667 participates in a covalent cross-link: Glycyl lysine isopeptide (Lys-Gly) (interchain with G-Cter in ubiquitin). N6-acetyllysine; alternate is present on K677. K677 is covalently cross-linked (Glycyl lysine isopeptide (Lys-Gly) (interchain with G-Cter in ubiquitin); alternate). At Y686 the chain carries Phosphotyrosine. Position 688 is a phosphoserine (S688). The segment at V690–I709 is disordered. S692 is modified (phosphoserine; alternate). S692 carries an O-linked (GlcNAc...) serine; alternate glycan. Positions G693–S708 are enriched in polar residues. T695 carries the post-translational modification Phosphothreonine. Residues S696, S701, S708, and S714 each carry the phosphoserine modification. Position 719 is a phosphothreonine (T719).

In terms of assembly, interacts with MARK1, MARK2, MARK3 and MARK4. Interacts with SQSTM1 when polyubiquitinated. Interacts with PSMC2 through SQSTM1. Interacts with FKBP4. Binds to CSNK1D. Interacts with SGK1. Interacts with EPM2A; the interaction dephosphorylates MAPT at Ser-369. Interacts with PIN1. Interacts with LRRK2. Interacts with LRP1, leading to endocytosis; this interaction is reduced in the presence of LRPAP1/RAP. Polyubiquitinated. Requires functional TRAF6 and may provoke SQSTM1-dependent degradation by the proteasome. Post-translationally, phosphorylation at various serine and threonine residues in S-P or T-P motifs by proline-directed protein kinases (PDPK1, CDK1, CDK5, GSK3, MAPK) (a few sites per protein in interphase, more in mitosis), and at serine residues in K-X-G-S motifs by MAP/microtubule affinity-regulating kinase (MARK1, MARK2, MARK3, MARK4), causing detachment from microtubules, and their disassembly. Phosphorylated by PHK. Dephosphorylation at several serine and threonine residues by the serine/threonine phosphatase PPP5C. Phosphorylation at Ser-554 by BRSK1 and BRSK2 in neurons affects ability to bind microtubules and plays a role in neuron polarization. Phosphorylation at Ser-188 by SGK1 mediates microtubule depolymerization and neurite formation in hippocampal neurons. As to expression, expressed in neurons and at a lower level in the liver and kidney. Isoform PNS-tau is expressed in the peripheral nervous system while the others are expressed in the central nervous system.

The protein localises to the cytoplasm. The protein resides in the cytosol. It is found in the cell membrane. It localises to the cytoskeleton. Its subcellular location is the cell projection. The protein localises to the axon. The protein resides in the dendrite. It is found in the secreted. Promotes microtubule assembly and stability, and might be involved in the establishment and maintenance of neuronal polarity. The C-terminus binds axonal microtubules while the N-terminus binds neural plasma membrane components, suggesting that tau functions as a linker protein between both. Axonal polarity is predetermined by tau localization (in the neuronal cell) in the domain of the cell body defined by the centrosome. The short isoforms allow plasticity of the cytoskeleton whereas the longer isoforms may preferentially play a role in its stabilization. The chain is Microtubule-associated protein tau from Mus musculus (Mouse).